Consider the following 424-residue polypeptide: Arginine biosynthesis bifunctional protein ArgJ (424 aa).

Residues T172, K198, T209, E296, N419, and S424 each coordinate substrate. T209 functions as the Nucleophile in the catalytic mechanism.

This sequence belongs to the ArgJ family. In terms of assembly, heterotetramer of two alpha and two beta chains.

The protein localises to the cytoplasm. It carries out the reaction N(2)-acetyl-L-ornithine + L-glutamate = N-acetyl-L-glutamate + L-ornithine. It catalyses the reaction L-glutamate + acetyl-CoA = N-acetyl-L-glutamate + CoA + H(+). It functions in the pathway amino-acid biosynthesis; L-arginine biosynthesis; L-ornithine and N-acetyl-L-glutamate from L-glutamate and N(2)-acetyl-L-ornithine (cyclic): step 1/1. The protein operates within amino-acid biosynthesis; L-arginine biosynthesis; N(2)-acetyl-L-ornithine from L-glutamate: step 1/4. Its function is as follows. Catalyzes two activities which are involved in the cyclic version of arginine biosynthesis: the synthesis of N-acetylglutamate from glutamate and acetyl-CoA as the acetyl donor, and of ornithine by transacetylation between N(2)-acetylornithine and glutamate. The chain is Arginine biosynthesis bifunctional protein ArgJ from Gluconobacter oxydans (strain 621H) (Gluconobacter suboxydans).